Consider the following 436-residue polypeptide: Nicotinate phosphoribosyltransferase (436 aa).

Position 231 is a phosphohistidine; by autocatalysis (H231).

Belongs to the NAPRTase family. In terms of processing, transiently phosphorylated on a His residue during the reaction cycle. Phosphorylation strongly increases the affinity for substrates and increases the rate of nicotinate D-ribonucleotide production. Dephosphorylation regenerates the low-affinity form of the enzyme, leading to product release.

It carries out the reaction nicotinate + 5-phospho-alpha-D-ribose 1-diphosphate + ATP + H2O = nicotinate beta-D-ribonucleotide + ADP + phosphate + diphosphate. The protein operates within cofactor biosynthesis; NAD(+) biosynthesis; nicotinate D-ribonucleotide from nicotinate: step 1/1. Catalyzes the synthesis of beta-nicotinate D-ribonucleotide from nicotinate and 5-phospho-D-ribose 1-phosphate at the expense of ATP. This chain is Nicotinate phosphoribosyltransferase, found in Vibrio campbellii (strain ATCC BAA-1116).